Here is a 721-residue protein sequence, read N- to C-terminus: uncharacterized protein (721 aa).

Disordered regions lie at residues 196 to 291 and 370 to 513; these read TSMT…VGGP and AGIP…AAEQ. 2 stretches are compositionally biased toward low complexity: residues 202 to 224 and 232 to 250; these read SPAGSPFGAAPSAPSHSTTTSGP and SPFGTAPMVLSSSSTSSGP. 2 stretches are compositionally biased toward pro residues: residues 264-283 and 379-389; these read PMPPGPPPPGTVSPPLPPSA and APTPSPAPIAP. Residues 419–429 are compositionally biased toward low complexity; sequence APAGPLPAYGA. A compositionally biased stretch (pro residues) spans 435 to 446; that stretch reads VTTPPATPPTPT. Residues 470–484 show a composition bias toward polar residues; it reads VNKSTAPATTQAQPS. Over residues 491 to 505 the composition is skewed to low complexity; sequence ASATAAATTGAAAGD.

This is an uncharacterized protein from Mycobacterium tuberculosis (strain ATCC 25618 / H37Rv).